Consider the following 237-residue polypeptide: Lipoprotein-releasing system ATP-binding protein LolD (237 aa).

The ABC transporter domain occupies 16-237 (LKCEGLTRIY…LDQGRLSEDA (222 aa)). 52–59 (GSSGSGKT) is a binding site for ATP.

It belongs to the ABC transporter superfamily. Lipoprotein translocase (TC 3.A.1.125) family. In terms of assembly, the complex is composed of two ATP-binding proteins (LolD) and two transmembrane proteins (LolC and LolE).

The protein localises to the cell inner membrane. Functionally, part of the ABC transporter complex LolCDE involved in the translocation of mature outer membrane-directed lipoproteins, from the inner membrane to the periplasmic chaperone, LolA. Responsible for the formation of the LolA-lipoprotein complex in an ATP-dependent manner. This is Lipoprotein-releasing system ATP-binding protein LolD from Chromohalobacter salexigens (strain ATCC BAA-138 / DSM 3043 / CIP 106854 / NCIMB 13768 / 1H11).